The chain runs to 590 residues: Aspartate--tRNA(Asp/Asn) ligase (590 aa).

Glu-176 contributes to the L-aspartate binding site. Residues 200 to 203 (QLFK) are aspartate. The L-aspartate site is built by Arg-222 and His-451. Position 222–224 (222–224 (RDE)) interacts with ATP. Glu-485 serves as a coordination point for ATP. Residue Arg-492 participates in L-aspartate binding. 537 to 540 (GIDR) contributes to the ATP binding site.

It belongs to the class-II aminoacyl-tRNA synthetase family. Type 1 subfamily. In terms of assembly, homodimer.

The protein localises to the cytoplasm. The catalysed reaction is tRNA(Asx) + L-aspartate + ATP = L-aspartyl-tRNA(Asx) + AMP + diphosphate. Aspartyl-tRNA synthetase with relaxed tRNA specificity since it is able to aspartylate not only its cognate tRNA(Asp) but also tRNA(Asn). Reaction proceeds in two steps: L-aspartate is first activated by ATP to form Asp-AMP and then transferred to the acceptor end of tRNA(Asp/Asn). The sequence is that of Aspartate--tRNA(Asp/Asn) ligase from Ehrlichia canis (strain Jake).